We begin with the raw amino-acid sequence, 524 residues long: Bifunctional purine biosynthesis protein PurH (524 aa).

Residues 1-145 (MIQQALLSVS…KNHRDVTVIV (145 aa)) enclose the MGS-like domain.

The protein belongs to the PurH family.

It carries out the reaction (6R)-10-formyltetrahydrofolate + 5-amino-1-(5-phospho-beta-D-ribosyl)imidazole-4-carboxamide = 5-formamido-1-(5-phospho-D-ribosyl)imidazole-4-carboxamide + (6S)-5,6,7,8-tetrahydrofolate. It catalyses the reaction IMP + H2O = 5-formamido-1-(5-phospho-D-ribosyl)imidazole-4-carboxamide. It functions in the pathway purine metabolism; IMP biosynthesis via de novo pathway; 5-formamido-1-(5-phospho-D-ribosyl)imidazole-4-carboxamide from 5-amino-1-(5-phospho-D-ribosyl)imidazole-4-carboxamide (10-formyl THF route): step 1/1. Its pathway is purine metabolism; IMP biosynthesis via de novo pathway; IMP from 5-formamido-1-(5-phospho-D-ribosyl)imidazole-4-carboxamide: step 1/1. The polypeptide is Bifunctional purine biosynthesis protein PurH (Ralstonia nicotianae (strain ATCC BAA-1114 / GMI1000) (Ralstonia solanacearum)).